Reading from the N-terminus, the 147-residue chain is Antiholin-like protein LrgA (147 aa).

Transmembrane regions (helical) follow at residues 12–32 (PAHFFHQVIVIALVLFVSKII), 35–55 (FMPIPMPGSVIGLVLLFVLLC), 74–94 (NIGLLFVPAGISVVNSLGVIS), and 98–118 (FLIIGLIIVSTILLLICTGYV).

Belongs to the CidA/LrgA family. LrgA subfamily.

It localises to the cell membrane. In terms of biological role, inhibits the expression or activity of extracellular murein hydrolases by interacting, possibly with LrgB, with the holin-like proteins CidA and/or CidB. The LrgAB and CidAB proteins may affect the proton motive force of the membrane. May be involved in programmed cell death (PCD), possibly triggering PCD in response to antibiotics and environmental stresses. In Staphylococcus aureus (strain MSSA476), this protein is Antiholin-like protein LrgA.